A 201-amino-acid chain; its full sequence is Syndecan-2 (201 aa).

An N-terminal signal peptide occupies residues 1–18; sequence MQRAWILLTLGLMACVSA. Over 19-144 the chain is Extracellular; it reads ETRAELTSDK…HSDNLFKRTE (126 aa). Residues S41, S55, and S57 are each glycosylated (O-linked (Xyl...) (glycosaminoglycan) serine). Disordered regions lie at residues 42-69 and 88-129; these read GLYPIDDDDYSSASGSGAYEDKGSPDLT and TMTL…KSTD. The span at 90–102 shows a compositional bias: polar residues; it reads TLKTQSITPTQTE. Basic and acidic residues predominate over residues 106–123; it reads ETDKKEFEISEAEEKQDP. S115 bears the Phosphoserine mark. A helical membrane pass occupies residues 145–169; that stretch reads VLAAVIAGGVIGFLFAIFLILLLVY. At 170–201 the chain is on the cytoplasmic side; that stretch reads RMRKKDEGSYDLGERKPSSAAYQKAPTKEFYA. The disordered stretch occupies residues 178–201; sequence SYDLGERKPSSAAYQKAPTKEFYA. Position 187 is a phosphoserine (S187).

Belongs to the syndecan proteoglycan family. Interacts (via cytoplasmic domain) with SARM1. Forms a complex with SDCBP and PDCD6IP. In terms of processing, O-glycosylated; contains both heparan sulfate and chondroitin sulfate.

The protein resides in the membrane. In terms of biological role, cell surface proteoglycan which regulates dendritic arbor morphogenesis. The polypeptide is Syndecan-2 (Sdc2) (Rattus norvegicus (Rat)).